Consider the following 604-residue polypeptide: Netrin-1 (604 aa).

Positions 1–24 are cleaved as a signal peptide; sequence MMRAVWEALAALAAVACLVGAVRG. A Laminin N-terminal domain is found at 47-284; that stretch reads HPRRCIPDFV…AVSDLQVGGR (238 aa). Asn-95, Asn-116, and Asn-131 each carry an N-linked (GlcNAc...) asparagine glycan. 15 disulfides stabilise this stretch: Cys-119-Cys-152, Cys-285-Cys-294, Cys-287-Cys-304, Cys-306-Cys-315, Cys-318-Cys-338, Cys-341-Cys-350, Cys-343-Cys-368, Cys-371-Cys-380, Cys-383-Cys-401, Cys-404-Cys-416, Cys-406-Cys-423, Cys-425-Cys-434, Cys-437-Cys-451, Cys-472-Cys-544, and Cys-491-Cys-601. Laminin EGF-like domains are found at residues 285 to 340, 341 to 403, and 404 to 453; these read CKCN…ECVA, CNCN…ACKA, and CDCH…PCIK. N-linked (GlcNAc...) asparagine glycosylation occurs at Asn-417. The NTR domain occupies 472 to 601; that stretch reads CDSYCKASKG…FQQREKKGKC (130 aa). The Cell attachment site motif lies at 530–532; it reads RGD.

In terms of assembly, binds to its receptors; DCC, UNC5A, UNC5B, UNC5C and probably UNC5D. Binds to its receptor; DSCAM. Interacts with DCC. Interacts with APP. Widely expressed in normal adult tissues with highest levels in heart, small intestine, colon, liver and prostate. Reduced expression in brain tumors and neuroblastomas. Expressed in epididymis (at protein level).

Its subcellular location is the secreted. It localises to the cytoplasm. Its function is as follows. Netrins control guidance of CNS commissural axons and peripheral motor axons. Its association with either DCC or some UNC5 receptors will lead to axon attraction or repulsion, respectively. Binding to UNC5C might cause dissociation of UNC5C from polymerized TUBB3 in microtubules and thereby lead to increased microtubule dynamics and axon repulsion. Involved in dorsal root ganglion axon projection towards the spinal cord. It also serves as a survival factor via its association with its receptors which prevent the initiation of apoptosis. Involved in tumorigenesis by regulating apoptosis. The chain is Netrin-1 (NTN1) from Homo sapiens (Human).